Consider the following 392-residue polypeptide: L-rhamnonate dehydratase (392 aa).

Positions 22 and 48 each coordinate substrate. The Mg(2+) site is built by D214, E240, and E268. H318 serves as the catalytic Proton acceptor. Substrate is bound at residue E338.

This sequence belongs to the mandelate racemase/muconate lactonizing enzyme family. RhamD subfamily. As to quaternary structure, homooctamer; tetramer of dimers. The cofactor is Mg(2+).

The catalysed reaction is L-rhamnonate = 2-dehydro-3-deoxy-L-rhamnonate + H2O. In terms of biological role, catalyzes the dehydration of L-rhamnonate to 2-keto-3-deoxy-L-rhamnonate (KDR). The polypeptide is L-rhamnonate dehydratase (Paraburkholderia xenovorans (strain LB400)).